A 405-amino-acid chain; its full sequence is tRNA N6-adenosine threonylcarbamoyltransferase, mitochondrial (405 aa).

A mitochondrion-targeting transit peptide spans 1–19 (MAKYISNLSRIAVVRGRVS). A divalent metal cation-binding residues include H138 and H142. Substrate contacts are provided by residues 160–164 (LISGG), D193, G213, E217, 320–321 (SN), and T348. D349 serves as a coordination point for a divalent metal cation.

This sequence belongs to the KAE1 / TsaD family. As to quaternary structure, monomer. Requires a divalent metal cation as cofactor.

The protein localises to the mitochondrion. The enzyme catalyses L-threonylcarbamoyladenylate + adenosine(37) in tRNA = N(6)-L-threonylcarbamoyladenosine(37) in tRNA + AMP + H(+). Its function is as follows. Required for the formation of a threonylcarbamoyl group on adenosine at position 37 (t(6)A37) in mitochondrial tRNAs that read codons beginning with adenine. Probably involved in the transfer of the threonylcarbamoyl moiety of threonylcarbamoyl-AMP (TC-AMP) to the N6 group of A37. Involved in mitochondrial genome maintenance. The polypeptide is tRNA N6-adenosine threonylcarbamoyltransferase, mitochondrial (Xenopus tropicalis (Western clawed frog)).